Here is a 443-residue protein sequence, read N- to C-terminus: Threonine/serine transporter TdcC (443 aa).

A run of 11 helical transmembrane segments spans residues Thr22 to Ile42, Ala44 to Phe64, Gly97 to Val117, Phe140 to Met160, Val163 to Ile183, Ile207 to Ile227, Ala259 to Ser279, Ala319 to Leu339, Ile366 to Leu386, Ile389 to Ile409, and Asp423 to Phe443.

This sequence belongs to the amino acid/polyamine transporter 2 family. SdaC/TdcC subfamily.

The protein localises to the cell inner membrane. It catalyses the reaction L-threonine(in) + H(+)(in) = L-threonine(out) + H(+)(out). The catalysed reaction is L-serine(in) + H(+)(in) = L-serine(out) + H(+)(out). In terms of biological role, involved in the import of threonine and serine into the cell, with the concomitant import of a proton (symport system). The chain is Threonine/serine transporter TdcC from Salmonella paratyphi B (strain ATCC BAA-1250 / SPB7).